The following is a 349-amino-acid chain: Ornithine carbamoyltransferase, mitochondrial (349 aa).

Carbamoyl phosphate is bound by residues 73 to 76, Arg124, His151, and Gln154; that span reads STRT. L-ornithine is bound by residues Asn195, Asp261, Ser265, and Met266. The Proton acceptor role is filled by Cys303. Carbamoyl phosphate is bound by residues 303–304 and Arg330; that span reads CL.

It belongs to the aspartate/ornithine carbamoyltransferase superfamily. OTCase family. As to quaternary structure, homotrimer.

The protein resides in the mitochondrion matrix. The catalysed reaction is carbamoyl phosphate + L-ornithine = L-citrulline + phosphate + H(+). It functions in the pathway amino-acid biosynthesis; L-arginine biosynthesis; L-arginine from L-ornithine and carbamoyl phosphate: step 1/3. The polypeptide is Ornithine carbamoyltransferase, mitochondrial (Coccidioides immitis (strain RS) (Valley fever fungus)).